The chain runs to 464 residues: Light-independent protochlorophyllide reductase subunit N (464 aa).

The [4Fe-4S] cluster site is built by cysteine 29, cysteine 54, and cysteine 114.

Belongs to the BchN/ChlN family. In terms of assembly, protochlorophyllide reductase is composed of three subunits; ChlL, ChlN and ChlB. Forms a heterotetramer of two ChlB and two ChlN subunits. [4Fe-4S] cluster is required as a cofactor.

It is found in the plastid. Its subcellular location is the chloroplast. The enzyme catalyses chlorophyllide a + oxidized 2[4Fe-4S]-[ferredoxin] + 2 ADP + 2 phosphate = protochlorophyllide a + reduced 2[4Fe-4S]-[ferredoxin] + 2 ATP + 2 H2O. It functions in the pathway porphyrin-containing compound metabolism; chlorophyll biosynthesis (light-independent). Its function is as follows. Component of the dark-operative protochlorophyllide reductase (DPOR) that uses Mg-ATP and reduced ferredoxin to reduce ring D of protochlorophyllide (Pchlide) to form chlorophyllide a (Chlide). This reaction is light-independent. The NB-protein (ChlN-ChlB) is the catalytic component of the complex. This Stigeoclonium helveticum (Green alga) protein is Light-independent protochlorophyllide reductase subunit N.